We begin with the raw amino-acid sequence, 536 residues long: Phosphoenolpyruvate carboxykinase (ATP) (536 aa).

Arginine 61, tyrosine 195, and lysine 201 together coordinate substrate. ATP contacts are provided by residues lysine 201, histidine 220, and 236–244; that span reads GLSGTGKTT. Residues lysine 201 and histidine 220 each contribute to the Mn(2+) site. Position 257 (aspartate 257) interacts with Mn(2+). Positions 285, 322, and 447 each coordinate ATP. Arginine 322 serves as a coordination point for substrate.

It belongs to the phosphoenolpyruvate carboxykinase (ATP) family. It depends on Mn(2+) as a cofactor.

The protein localises to the cytoplasm. The catalysed reaction is oxaloacetate + ATP = phosphoenolpyruvate + ADP + CO2. It participates in carbohydrate biosynthesis; gluconeogenesis. In terms of biological role, involved in the gluconeogenesis. Catalyzes the conversion of oxaloacetate (OAA) to phosphoenolpyruvate (PEP) through direct phosphoryl transfer between the nucleoside triphosphate and OAA. This Sinorhizobium medicae (strain WSM419) (Ensifer medicae) protein is Phosphoenolpyruvate carboxykinase (ATP).